The following is a 412-amino-acid chain: 1-deoxy-D-xylulose 5-phosphate reductoisomerase (412 aa).

NADPH contacts are provided by Thr5, Gly6, Ser7, Ile8, Gly31, Arg32, Asn33, and Asn125. Lys126 contacts 1-deoxy-D-xylulose 5-phosphate. Glu127 lines the NADPH pocket. Mn(2+) is bound at residue Asp151. 1-deoxy-D-xylulose 5-phosphate is bound by residues Ser152, Glu153, Ser189, and His212. Glu153 is a binding site for Mn(2+). An NADPH-binding site is contributed by Gly218. Ser225, Asn230, Lys231, and Glu234 together coordinate 1-deoxy-D-xylulose 5-phosphate. Glu234 is a Mn(2+) binding site.

This sequence belongs to the DXR family. The cofactor is Mg(2+). Mn(2+) serves as cofactor.

The catalysed reaction is 2-C-methyl-D-erythritol 4-phosphate + NADP(+) = 1-deoxy-D-xylulose 5-phosphate + NADPH + H(+). It functions in the pathway isoprenoid biosynthesis; isopentenyl diphosphate biosynthesis via DXP pathway; isopentenyl diphosphate from 1-deoxy-D-xylulose 5-phosphate: step 1/6. Functionally, catalyzes the NADPH-dependent rearrangement and reduction of 1-deoxy-D-xylulose-5-phosphate (DXP) to 2-C-methyl-D-erythritol 4-phosphate (MEP). The sequence is that of 1-deoxy-D-xylulose 5-phosphate reductoisomerase from Prochlorococcus marinus (strain SARG / CCMP1375 / SS120).